A 470-amino-acid chain; its full sequence is MSDTVISLISHSITTVFYLVPLIIALIIPFSLYSGFRRKSKTVAFFHPYCNAGGGGERVLWAAIRTMQKKFPDHKYFVYSGDTDATKEQILLKARQRFGIELDPSNIQFIYLHWRTLVEARHYKHCTMLFQALAGLILALEAWFRMVPAVFIDSMGYPLSLPAFRLSGSKVVAYVHYPTISCDMLDVVESRQETFNNSSTIAQSNVLSWGKLTYYRLFACLYWLAGKAAHVGMVNGSWTQRHITSIWSRRDVSIVYPPCDVEAFLNIESVAESLLEDTKTVRLLSVGQIRPEKNHKLQLEVLHDVKEPLEKMGYNVELCIAGGCRNEEDQERVKMLKNEAEKLDISEQLIWQLNVPYEDLVVELSKALISIHTMHNEHFGISVVEAMAASTIILSNDSGGPRMDIVKDYEGHCVGYLSITKEEYVETILKIVEEGLKKRNDTRKYARKSLTRFGEAAFETHWNKEIEKVL.

The Lumenal segment spans residues 1-15 (MSDTVISLISHSITT). A helical transmembrane segment spans residues 16 to 36 (VFYLVPLIIALIIPFSLYSGF). Residues 37-131 (RRKSKTVAFF…HYKHCTMLFQ (95 aa)) lie on the Cytoplasmic side of the membrane. Positions 132 to 152 (ALAGLILALEAWFRMVPAVFI) form an intramembrane region, helical. At 153-378 (DSMGYPLSLP…ISIHTMHNEH (226 aa)) the chain is on the cytoplasmic side. Residues 379–399 (FGISVVEAMAASTIILSNDSG) constitute an intramembrane region (helical). Residues 400-470 (GPRMDIVKDY…HWNKEIEKVL (71 aa)) lie on the Cytoplasmic side of the membrane.

The protein belongs to the glycosyltransferase group 1 family. Glycosyltransferase 4 subfamily.

It localises to the endoplasmic reticulum membrane. The enzyme catalyses an alpha-D-Man-(1-&gt;3)-[alpha-D-Man-(1-&gt;6)]-beta-D-Man-(1-&gt;4)-beta-D-GlcNAc-(1-&gt;4)-alpha-D-GlcNAc-diphospho-di-trans,poly-cis-dolichol + 2 GDP-alpha-D-mannose = an alpha-D-Man-(1-&gt;2)-alpha-D-Man-(1-&gt;2)-alpha-D-Man-(1-&gt;3)-[alpha-D-Man-(1-&gt;6)]-beta-D-Man-(1-&gt;4)-beta-D-GlcNAc-(1-&gt;4)-alpha-D-GlcNAc-diphospho-di-trans,poly-cis-dolichol + 2 GDP + 2 H(+). It participates in protein modification; protein glycosylation. GDP-Man:Man(3)GlcNAc(2)-PP-Dol alpha-1,2-mannosyltransferase that operates in the biosynthetic pathway of dolichol-linked oligosaccharides, the glycan precursors employed in protein asparagine (N)-glycosylation. The assembly of dolichol-linked oligosaccharides begins on the cytosolic side of the endoplasmic reticulum membrane and finishes in its lumen. The sequential addition of sugars to dolichol pyrophosphate produces dolichol-linked oligosaccharides containing fourteen sugars, including two GlcNAcs, nine mannoses and three glucoses. Once assembled, the oligosaccharide is transferred from the lipid to nascent proteins by oligosaccharyltransferases. Catalyzes, on the cytoplasmic face of the endoplasmic reticulum, the addition of the fourth and fifth mannose residues to the dolichol-linked oligosaccharide chain, to produce Man(5)GlcNAc(2)-PP-dolichol core oligosaccharide. Man(5)GlcNAc(2)-PP-dolichol is a substrate for ALG3, the following enzyme in the biosynthetic pathway. This Caenorhabditis elegans protein is GDP-Man:Man(3)GlcNAc(2)-PP-Dol alpha-1,2-mannosyltransferase.